Reading from the N-terminus, the 407-residue chain is MKEKVILAYSGGLDTTAIIPWLKENYDYDVVCCCIDVGQGNELDGLEERAKLSGATKLYIEHVTDEFVDEYVMPCVKAGAVYENKYLLGTSMARPVIAKKLVEVAIKENAVAICHGATGKGNDQVRFELGIKALAPDLKIIAPWRCNNTWKMQSREDEIEYCKAHGIDLPFDASHSYSRDRNLWHISHEGLELEDPANAPNYDHLLVLGVSPEKAPNEAESLSLTFEKGIPVALNGKAMKASEIIEELNVLGGKYGIGIIDIVENRVVGMKSRGVYETPGGTILMEAHTQLEELILDRATLSCKKEIGNKFADVVYEGKWFTPLREALQAFVEVTQEYVTGEVKLKLYKGNIIKQGTTSPYSLYNESIASFTTGELYNHHDAEGFINLFGLSLKVRAMKMAEVEKNK.

8–16 (AYSGGLDTT) lines the ATP pocket. L-citrulline-binding residues include tyrosine 86 and serine 91. An ATP-binding site is contributed by glycine 116. L-aspartate-binding residues include threonine 118, asparagine 122, and aspartate 123. Asparagine 122 contributes to the L-citrulline binding site. L-citrulline is bound by residues arginine 126, serine 178, serine 187, glutamate 264, and tyrosine 276.

This sequence belongs to the argininosuccinate synthase family. Type 1 subfamily. Homotetramer.

Its subcellular location is the cytoplasm. The enzyme catalyses L-citrulline + L-aspartate + ATP = 2-(N(omega)-L-arginino)succinate + AMP + diphosphate + H(+). It functions in the pathway amino-acid biosynthesis; L-arginine biosynthesis; L-arginine from L-ornithine and carbamoyl phosphate: step 2/3. This chain is Argininosuccinate synthase, found in Lachnoclostridium phytofermentans (strain ATCC 700394 / DSM 18823 / ISDg) (Clostridium phytofermentans).